A 397-amino-acid chain; its full sequence is CCA-adding enzyme (397 aa).

Positions 26 and 29 each coordinate ATP. 2 residues coordinate CTP: Gly-26 and Arg-29. Mg(2+) contacts are provided by Asp-39 and Asp-41. ATP-binding residues include Arg-110, Asp-153, Arg-156, Arg-159, and Arg-162. CTP-binding residues include Arg-110, Asp-153, Arg-156, Arg-159, and Arg-162.

This sequence belongs to the tRNA nucleotidyltransferase/poly(A) polymerase family. Bacterial CCA-adding enzyme type 3 subfamily. As to quaternary structure, homodimer. Requires Mg(2+) as cofactor.

It catalyses the reaction a tRNA precursor + 2 CTP + ATP = a tRNA with a 3' CCA end + 3 diphosphate. The enzyme catalyses a tRNA with a 3' CCA end + 2 CTP + ATP = a tRNA with a 3' CCACCA end + 3 diphosphate. Its function is as follows. Catalyzes the addition and repair of the essential 3'-terminal CCA sequence in tRNAs without using a nucleic acid template. Adds these three nucleotides in the order of C, C, and A to the tRNA nucleotide-73, using CTP and ATP as substrates and producing inorganic pyrophosphate. tRNA 3'-terminal CCA addition is required both for tRNA processing and repair. Also involved in tRNA surveillance by mediating tandem CCA addition to generate a CCACCA at the 3' terminus of unstable tRNAs. While stable tRNAs receive only 3'-terminal CCA, unstable tRNAs are marked with CCACCA and rapidly degraded. The protein is CCA-adding enzyme of Bacillus cereus (strain ZK / E33L).